The sequence spans 270 residues: Cerberus (270 aa).

A signal peptide spans 1-20 (MLLNVLRICIIVCLVNDGAG). N-linked (GlcNAc...) asparagine glycans are attached at residues asparagine 103, asparagine 112, and asparagine 154. Intrachain disulfides connect cysteine 169–cysteine 215, cysteine 183–cysteine 229, cysteine 193–cysteine 245, and cysteine 197–cysteine 247. Residues 169 to 253 (CKTLPFTQNI…ECTCEAHKSN (85 aa)) form the CTCK domain. Asparagine 228 carries N-linked (GlcNAc...) asparagine glycosylation.

This sequence belongs to the DAN family. In terms of assembly, the long chain interacts with nodal/nr-1, bmp4 and wnt8, thereby inhibiting their function. The short chain interacts with nodal/nr-1 but not bmp4 or wnt8. As to expression, a component of the Nieuwkoop signaling center in the blastula. Expressed transiently in a broad anterior domain of the gastrula, including the anterior endoderm of the Spemann's organizer and more laterally the cardiac primordia. Expression is excluded from the prospective prechordal plate region and the ring of cells that give rise to the trunk-tail mesoderm.

It is found in the secreted. Functionally, inhibits wnt, nodal/nr-1 and bmp signaling in the embryo to promote head formation and anterior neural induction. Within the endoderm, acts as an essential mediator of nodal/nr-1-induced cardiogenesis in the overlying mesoderm. This chain is Cerberus, found in Xenopus laevis (African clawed frog).